The chain runs to 114 residues: Dolichyl-diphosphooligosaccharide--protein glycosyltransferase subunit DAD2 (114 aa).

The Cytoplasmic segment spans residues Met-1–Asp-30. The helical transmembrane segment at Leu-31–Gly-51 threads the bilayer. The Lumenal portion of the chain corresponds to Ser-52–Pro-54. The helical transmembrane segment at Phe-55 to Leu-75 threads the bilayer. The Cytoplasmic segment spans residues Arg-76 to Arg-93. Residues Ala-94–Gly-114 traverse the membrane as a helical segment.

It belongs to the DAD/OST2 family. Component of the oligosaccharyltransferase (OST) complex.

The protein resides in the endoplasmic reticulum membrane. It functions in the pathway protein modification; protein glycosylation. Functionally, subunit of the oligosaccharyl transferase (OST) complex that catalyzes the initial transfer of a defined glycan (Glc(3)Man(9)GlcNAc(2) in eukaryotes) from the lipid carrier dolichol-pyrophosphate to an asparagine residue within an Asn-X-Ser/Thr consensus motif in nascent polypeptide chains, the first step in protein N-glycosylation. N-glycosylation occurs cotranslationally and the complex associates with the Sec61 complex at the channel-forming translocon complex that mediates protein translocation across the endoplasmic reticulum (ER). All subunits are required for a maximal enzyme activity. The protein is Dolichyl-diphosphooligosaccharide--protein glycosyltransferase subunit DAD2 (DAD2) of Hordeum vulgare (Barley).